Consider the following 1118-residue polypeptide: Receptor-type guanylate cyclase gcy-2 (1118 aa).

The N-terminal stretch at methionine 1–alanine 21 is a signal peptide. The Extracellular portion of the chain corresponds to glutamine 22 to tyrosine 494. N-linked (GlcNAc...) asparagine glycosylation is found at asparagine 222, asparagine 351, asparagine 361, asparagine 387, asparagine 420, and asparagine 452. The helical transmembrane segment at methionine 495 to glycine 515 threads the bilayer. Residues cysteine 516–asparagine 1118 lie on the Cytoplasmic side of the membrane. The Protein kinase domain maps to leucine 558–phenylalanine 875. Positions threonine 872–glutamate 1002 constitute a Guanylate cyclase domain. The interval tryptophan 1076 to leucine 1103 is disordered.

This sequence belongs to the adenylyl cyclase class-4/guanylyl cyclase family. Expressed bilaterally in AWA and ASI sensory neurons and in RIA and PVT interneurons.

It localises to the cell membrane. It catalyses the reaction GTP = 3',5'-cyclic GMP + diphosphate. Guanylate cyclase involved in the production of the second messenger cGMP. In Caenorhabditis elegans, this protein is Receptor-type guanylate cyclase gcy-2.